The following is a 2664-amino-acid chain: Inositol 1,4,5-trisphosphate-gated calcium channel ITPR3 (2664 aa).

The Cytoplasmic portion of the chain corresponds to 1-2227 (MSEMSSFLHI…YVEGASTGVL (2227 aa)). 5 MIR domains span residues 113–173 (GDVV…LRSN), 174–224 (GDNV…INLF), 232–288 (EEVL…VEVV), 295–372 (GGAG…LDPT), and 378–434 (DSFV…IVSV). 1D-myo-inositol 1,4,5-trisphosphate contacts are provided by R266, T268, L269, and R270. A disordered region spans residues 320 to 344 (NPSYKGDASDPKAAGTGAQGRTGRR). Positions 503, 507, 510, 567, 568, and 569 each coordinate 1D-myo-inositol 1,4,5-trisphosphate. R743 contributes to the Ca(2+) binding site. S909 and S927 each carry phosphoserine. Residues E1115 and E1118 each coordinate Ca(2+). Disordered stretches follow at residues 1124 to 1158 (KGASKGEEGEAGPAKDKKERPTDEEGFLHPPGEKS) and 1790 to 1850 (QQET…VGER). Over residues 1792-1805 (ETKSTVAVNMSDLG) the composition is skewed to polar residues. Residues S1806, S1825, and S1827 each carry the phosphoserine modification. Ca(2+) contacts are provided by E1875 and E1939. ATP is bound by residues A1989, E2142, and K2145. The helical transmembrane segment at 2228-2248 (GSPLISLLFWILICFSIAALF) threads the bilayer. Residues 2249-2256 (TKRYSVRP) are Extracellular-facing. Residues 2257 to 2277 (LIVALILRSIYYLGIGPTLNI) traverse the membrane as a helical segment. Over 2278–2286 (LGALNLTNK) the chain is Cytoplasmic. A helical membrane pass occupies residues 2287–2304 (IVFVVSFVGNRGTFIRGY). Topologically, residues 2305-2318 (KAMVMDMEFLYHVG) are extracellular. Residues 2319 to 2339 (YILTSVLGLFAHELFYSILLF) traverse the membrane as a helical segment. Residues 2340-2361 (DLIYREETLFNVIKSVTRNGRS) lie on the Cytoplasmic side of the membrane. A helical membrane pass occupies residues 2362-2382 (ILLTALLALILVYLFSIVGFL). Residues 2383–2489 (FLKDDFILEV…ESLFPARVVY (107 aa)) lie on the Extracellular side of the membrane. Cysteines 2448 and 2454 form a disulfide. A helical transmembrane segment spans residues 2490–2510 (DLLFFFIVIIIVLNLIFGVII). The Cytoplasmic portion of the chain corresponds to 2511–2664 (DTFADLRSEK…FVDVQNCMSR (154 aa)). The ATP site is built by C2531 and F2532. Residue C2531 participates in Zn(2+) binding. 2 residues coordinate Zn(2+): C2534 and H2551. Residues K2553, H2556, N2557, and M2558 each contribute to the ATP site. A Zn(2+)-binding site is contributed by H2556. T2574 provides a ligand contact to Ca(2+). Residues S2602 and S2663 each carry the phosphoserine modification.

It belongs to the InsP3 receptor family. In terms of assembly, homotetramer. Homodimer. Interacts with TRPC1, TRPC3 and TRPC4. Interacts with TRPV4. Interacts with SIGMAR1. Interacts with PML and AKT1. Interacts with IRAG2 (via coiled-coil domain). Interacts with CABP1. Interacts with TMBIM4/LFG4. Interacts with CEMIP. Interacts with TESPA1. Interacts with TMEM203. Interacts with BOK; regulates ITPR3 expression. Interacts with BCL2L10. Interacts with CHGA and CHGB. In terms of processing, phosphorylated by AKT1 on serine and/or threonine residues.

The protein localises to the endoplasmic reticulum membrane. It localises to the cytoplasmic vesicle. It is found in the secretory vesicle membrane. It catalyses the reaction Ca(2+)(in) = Ca(2+)(out). Its activity is regulated as follows. Inositol 1,4,5-trisphosphate-gated calcium channel is regulated by cytosolic calcium in a biphasic manner. At low concentrations, cytosolic calcium binds at a high-affinity juxtamembrane domain (JD) calcium binding site, allowing ITPR3 to activate by escaping a low-energy resting state through an ensemble of preactivated states. At high cytosolic calcium concentrations, ITPR3 preferentially enters an inhibited state stabilized by calcium binding at a second, low-affinity cytoplasmic domain (CD) calcium binding site. In terms of biological role, inositol 1,4,5-trisphosphate-gated calcium channel that, upon 1D-myo-inositol 1,4,5-trisphosphate binding, transports calcium from the endoplasmic reticulum lumen to cytoplasm, thus releasing the intracellular calcium and therefore participates in cellular calcium ion homeostasis. 1D-myo-inositol 1,4,5-trisphosphate binds to the ligand-free channel without altering its global conformation, yielding the low-energy resting state, then progresses through resting-to preactivated transitions to the higher energy preactivated state, which increases affinity for calcium, promoting binding of the low basal cytosolic calcium at the juxtamembrane domain (JD) site, favoring the transition through the ensemble of high-energy intermediate states along the trajectory to the fully-open activated state. Upon opening, releases calcium in the cytosol where it can bind to the low-affinity cytoplasmic domain (CD) site and stabilizes the inhibited state to terminate calcium release. The chain is Inositol 1,4,5-trisphosphate-gated calcium channel ITPR3 from Bos taurus (Bovine).